Here is a 153-residue protein sequence, read N- to C-terminus: UPF0178 protein CC_1215 (153 aa).

The protein belongs to the UPF0178 family.

The sequence is that of UPF0178 protein CC_1215 from Caulobacter vibrioides (strain ATCC 19089 / CIP 103742 / CB 15) (Caulobacter crescentus).